A 55-amino-acid polypeptide reads, in one-letter code: UPF0434 protein BPEN_388 (55 aa).

It belongs to the UPF0434 family.

The chain is UPF0434 protein BPEN_388 from Blochmanniella pennsylvanica (strain BPEN).